Consider the following 445-residue polypeptide: UDP-N-acetylmuramoylalanine--D-glutamate ligase (445 aa).

Residue 118-124 (GTNGKTT) coordinates ATP.

The protein belongs to the MurCDEF family.

Its subcellular location is the cytoplasm. The catalysed reaction is UDP-N-acetyl-alpha-D-muramoyl-L-alanine + D-glutamate + ATP = UDP-N-acetyl-alpha-D-muramoyl-L-alanyl-D-glutamate + ADP + phosphate + H(+). It participates in cell wall biogenesis; peptidoglycan biosynthesis. In terms of biological role, cell wall formation. Catalyzes the addition of glutamate to the nucleotide precursor UDP-N-acetylmuramoyl-L-alanine (UMA). The chain is UDP-N-acetylmuramoylalanine--D-glutamate ligase from Macrococcus caseolyticus (strain JCSC5402) (Macrococcoides caseolyticum).